A 431-amino-acid chain; its full sequence is MASWLQIPKNSPFSLANIPFGIISSSKLSSRVPAIAIGDYALDLSKFASSGGFSQLPVIQPHLNVFNQSTLNAFAALGRPVHRQVREYIQKVFSTETPFPQILRDNAALQKEALLPLSEVTNHLPMQIGDYTDFYAGLNHAYNVGVLFRGPDNALQPNYKHLPVAYHGRASSVVTSGTPLHRPQGQILTNPAANPKLPTFSPCKKLDIELELAFFVSTPNDLGHPVHIDKAEDHIFGVVLMNDWSARDIQAWEYVPLGPFNAKNFGTTITPWVVLIDALEPFRTVGLEPGNRESLLPYLREKRADTAYDIPLEVEVTNAGGEPTVISHSNAKNLLYSFPQMLAHHTITGCNLNTGDLLGSGTISGKENQTEGSFLEQTNGKNPIKLADGSERLFLEDGDTVILRGMAGTEGNYVGFGDCAGTILPPVQLDL.

Aspartate 133 serves as a coordination point for Ca(2+). Tyrosine 135 is a binding site for substrate. Histidine 140 (proton acceptor) is an active-site residue. Arginine 149 is a substrate binding site. 3 residues coordinate Ca(2+): glutamate 209, glutamate 211, and aspartate 243. Aspartate 243 provides a ligand contact to Mg(2+). Residues glutamine 250 and tyrosine 254 each coordinate substrate. Residues lysine 263 and threonine 267 each coordinate Mg(2+). Threonine 362 contributes to the substrate binding site.

It belongs to the FAH family. It depends on Ca(2+) as a cofactor. The cofactor is Mg(2+).

The enzyme catalyses 4-fumarylacetoacetate + H2O = acetoacetate + fumarate + H(+). Its pathway is amino-acid degradation; L-phenylalanine degradation; acetoacetate and fumarate from L-phenylalanine: step 6/6. In terms of biological role, use of phenylalanine and phenylacetate as a carbon source. The polypeptide is Fumarylacetoacetase (fahA) (Emericella nidulans (strain FGSC A4 / ATCC 38163 / CBS 112.46 / NRRL 194 / M139) (Aspergillus nidulans)).